The primary structure comprises 236 residues: Repetitive proline-rich cell wall protein (236 aa).

The signal sequence occupies residues 1–22 (MASSNFLVLLLFALFVIPQGLA). Repeat copies occupy residues 27-31 (PPVYQ), 32-36 (PPVYK), 37-41 (PPVEK), 42-46 (PPVYK), 47-51 (PPVEK), 52-56 (PPVYK), 57-61 (PPVYK), 62-66 (PPVEK), 67-71 (PPVYK), 72-76 (PPVVK), 77-81 (PPVYK), 82-86 (PPVYK), 87-91 (PPVYK), 92-96 (PPVEK), 97-101 (PPVYK), 102-106 (PPVYK), 107-111 (PPVYK), 112-116 (PPVVK), 117-121 (PPVYK), 122-126 (PPVYK), 127-131 (PPVEK), 132-136 (PPVYK), 137-141 (PPVYK), 142-146 (PPVEK), 147-151 (PPVYK), 152-156 (PPVEK), 157-161 (PPVYK), 162-166 (PPVYK), 167-171 (PPVYK), 172-176 (PPVVK), 177-181 (PPVYK), 182-186 (PPVYK), 187-191 (PPVYK), 192-196 (PPVEK), 197-201 (PPVYK), 202-206 (PPVYK), 207-211 (PPVEK), 212-216 (PPVYK), 217-221 (PPVYK), 222-226 (PPVEK), and 227-231 (PPVYG). Residues 27–236 (PPVYQPPVYK…PPVYGPPHHP (210 aa)) are 42 X 5 AA approximate tandem repeats of P-P-V-[EYV]-[KQG]. Positions 143 to 177 (PVEKPPVYKPPVEKPPVYKPPVYKPPVYKPPVVKP) are disordered. Positions 204-236 (VYKPPVEKPPVYKPPVYKPPVEKPPVYGPPHHP) are disordered. The 42; approximate repeat unit spans residues 232–236 (PPHHP).

Belongs to the plant proline-rich protein superfamily. ENOD12 family.

It localises to the secreted. The protein localises to the cell wall. Its function is as follows. This is a developmentally regulated putative cell wall protein. The protein is Repetitive proline-rich cell wall protein (PRP) of Medicago sativa (Alfalfa).